Consider the following 189-residue polypeptide: Protein GrpE (189 aa).

Basic and acidic residues predominate over residues 1-38 (MTKSNETERMEESEETHSSDIRSASESDHASGSDHTES). The disordered stretch occupies residues 1–54 (MTKSNETERMEESEETHSSDIRSASESDHASGSDHTESADEIPTADAEQGELEQ).

Belongs to the GrpE family. Homodimer.

The protein localises to the cytoplasm. Participates actively in the response to hyperosmotic and heat shock by preventing the aggregation of stress-denatured proteins, in association with DnaK and GrpE. It is the nucleotide exchange factor for DnaK and may function as a thermosensor. Unfolded proteins bind initially to DnaJ; upon interaction with the DnaJ-bound protein, DnaK hydrolyzes its bound ATP, resulting in the formation of a stable complex. GrpE releases ADP from DnaK; ATP binding to DnaK triggers the release of the substrate protein, thus completing the reaction cycle. Several rounds of ATP-dependent interactions between DnaJ, DnaK and GrpE are required for fully efficient folding. This Tropheryma whipplei (strain TW08/27) (Whipple's bacillus) protein is Protein GrpE.